The primary structure comprises 340 residues: Glycerol-3-phosphate dehydrogenase [NAD(P)+] (340 aa).

Residues Ser-11, Trp-12, Arg-32, Arg-33, and Lys-106 each coordinate NADPH. Sn-glycerol 3-phosphate contacts are provided by Lys-106, Gly-138, and Ser-140. Ala-142 provides a ligand contact to NADPH. Residues Lys-193, Asp-246, Ser-256, Arg-257, and Asn-258 each coordinate sn-glycerol 3-phosphate. Lys-193 (proton acceptor) is an active-site residue. Position 257 (Arg-257) interacts with NADPH. Val-281 and Glu-283 together coordinate NADPH.

This sequence belongs to the NAD-dependent glycerol-3-phosphate dehydrogenase family.

It is found in the cytoplasm. The enzyme catalyses sn-glycerol 3-phosphate + NAD(+) = dihydroxyacetone phosphate + NADH + H(+). It catalyses the reaction sn-glycerol 3-phosphate + NADP(+) = dihydroxyacetone phosphate + NADPH + H(+). It participates in membrane lipid metabolism; glycerophospholipid metabolism. In terms of biological role, catalyzes the reduction of the glycolytic intermediate dihydroxyacetone phosphate (DHAP) to sn-glycerol 3-phosphate (G3P), the key precursor for phospholipid synthesis. This Shouchella clausii (strain KSM-K16) (Alkalihalobacillus clausii) protein is Glycerol-3-phosphate dehydrogenase [NAD(P)+].